The following is a 72-amino-acid chain: Toxin Cll8 (72 aa).

Positions 1–4 (TVSA) are cleaved as a signal peptide. An LCN-type CS-alpha/beta domain is found at 5-70 (KEGYLVKKSN…TWPLPNKSCG (66 aa)). 4 cysteine pairs are disulfide-bonded: Cys-16-Cys-69, Cys-20-Cys-45, Cys-29-Cys-50, and Cys-33-Cys-52. Cys-69 is subject to Cysteine amide.

This sequence belongs to the long (4 C-C) scorpion toxin superfamily. Sodium channel inhibitor family. Beta subfamily. In terms of tissue distribution, expressed by the venom gland.

The protein resides in the secreted. Beta toxins bind voltage-independently at site-4 of sodium channels (Nav) and shift the voltage of activation toward more negative potentials thereby affecting sodium channel activation and promoting spontaneous and repetitive firing. This Centruroides limpidus (Mexican scorpion) protein is Toxin Cll8.